A 353-amino-acid polypeptide reads, in one-letter code: Ubiquinol oxidase 2, mitochondrial (353 aa).

The transit peptide at 1–21 (MSQLITKAALRVLLVCGRGNC) directs the protein to the mitochondrion. A helical membrane pass occupies residues 178-198 (AMMLETVAAVPGMVGGMLLHL). 3 residues coordinate Fe cation: Glu182, Glu221, and His224. Residues 240–260 (LLVMLVQGIFFNSFFVCYVIS) form a helical membrane-spanning segment. Residues Glu272, Glu323, and His326 each coordinate Fe cation.

The protein belongs to the alternative oxidase family. In terms of assembly, homodimer; disulfide-linked. The cofactor is Fe cation. As to expression, maximally expressed in dry seeds. Detected in roots, stems and leaves.

It localises to the mitochondrion inner membrane. The catalysed reaction is 2 a ubiquinol + O2 = 2 a ubiquinone + 2 H2O. Its function is as follows. Catalyzes the cyanide-resistant oxidation of ubiquinol and the reduction of molecular oxygen to water, but does not translocate protons and consequently is not linked to oxidative phosphorylation. May increase respiration when the cytochrome respiratory pathway is restricted, or in response to low temperatures. The sequence is that of Ubiquinol oxidase 2, mitochondrial (AOX2) from Arabidopsis thaliana (Mouse-ear cress).